The sequence spans 365 residues: Histidinol-phosphate aminotransferase (365 aa).

Position 222 is an N6-(pyridoxal phosphate)lysine (lysine 222).

This sequence belongs to the class-II pyridoxal-phosphate-dependent aminotransferase family. Histidinol-phosphate aminotransferase subfamily. Homodimer. It depends on pyridoxal 5'-phosphate as a cofactor.

It carries out the reaction L-histidinol phosphate + 2-oxoglutarate = 3-(imidazol-4-yl)-2-oxopropyl phosphate + L-glutamate. The protein operates within amino-acid biosynthesis; L-histidine biosynthesis; L-histidine from 5-phospho-alpha-D-ribose 1-diphosphate: step 7/9. In Geobacillus thermodenitrificans (strain NG80-2), this protein is Histidinol-phosphate aminotransferase.